The chain runs to 274 residues: MTKEKKSFHLHMLSDATGETLISVGRAVASQYTTYQATEHIYPMIRNKIQLEKALDEIKQEPGIVLYTMIDEELKLLLQKICKKIKIPCIDILHPVLNAFQSYLGTPTHLRVSAQHDLNADYFRRIEALDFTIEHDDGQSSSNLFEADVILVGISRTSKTPTSIYLANRGIKTANVPLIPNIDLPESLLEAKNSLIIGLIASAERISHIRQNRDLGEGFAFDNYTNRINIAEELIYAKRICERFGWPVIDVTRRSIEETAAAIFELLSRFREEK.

153-160 is an ADP binding site; sequence GISRTSKT.

It belongs to the pyruvate, phosphate/water dikinase regulatory protein family. PDRP subfamily.

It catalyses the reaction N(tele)-phospho-L-histidyl/L-threonyl-[pyruvate, phosphate dikinase] + ADP = N(tele)-phospho-L-histidyl/O-phospho-L-threonyl-[pyruvate, phosphate dikinase] + AMP + H(+). It carries out the reaction N(tele)-phospho-L-histidyl/O-phospho-L-threonyl-[pyruvate, phosphate dikinase] + phosphate + H(+) = N(tele)-phospho-L-histidyl/L-threonyl-[pyruvate, phosphate dikinase] + diphosphate. Functionally, bifunctional serine/threonine kinase and phosphorylase involved in the regulation of the pyruvate, phosphate dikinase (PPDK) by catalyzing its phosphorylation/dephosphorylation. The chain is Putative pyruvate, phosphate dikinase regulatory protein from Bartonella tribocorum (strain CIP 105476 / IBS 506).